A 294-amino-acid polypeptide reads, in one-letter code: 4-hydroxy-tetrahydrodipicolinate synthase (294 aa).

Thr45 serves as a coordination point for pyruvate. Catalysis depends on Tyr133, which acts as the Proton donor/acceptor. Lys162 functions as the Schiff-base intermediate with substrate in the catalytic mechanism. Val204 contacts pyruvate.

The protein belongs to the DapA family. Homotetramer; dimer of dimers.

Its subcellular location is the cytoplasm. It catalyses the reaction L-aspartate 4-semialdehyde + pyruvate = (2S,4S)-4-hydroxy-2,3,4,5-tetrahydrodipicolinate + H2O + H(+). Its pathway is amino-acid biosynthesis; L-lysine biosynthesis via DAP pathway; (S)-tetrahydrodipicolinate from L-aspartate: step 3/4. Its function is as follows. Catalyzes the condensation of (S)-aspartate-beta-semialdehyde [(S)-ASA] and pyruvate to 4-hydroxy-tetrahydrodipicolinate (HTPA). This is 4-hydroxy-tetrahydrodipicolinate synthase from Bartonella bacilliformis (strain ATCC 35685 / KC583 / Herrer 020/F12,63).